The sequence spans 311 residues: Class E basic helix-loop-helix protein 22 (311 aa).

Positions 22-170 (AKRMESAFRS…GGSKKSKEQK (149 aa)) are disordered. Residues 81–96 (GESASRSSVAESSGGE) are compositionally biased toward low complexity. Over residues 125 to 147 (AGGGGGGGGGGGGGPGGGGGGGL) the composition is skewed to gly residues. One can recognise a bHLH domain in the interval 171 to 225 (ALRLNINARERRRMHDLNDALDELRAVIPYAHSPSVRKLSKIATLLLAKNYILMQ).

It localises to the nucleus. May act as a transcriptional repressor. This is Class E basic helix-loop-helix protein 22 (BHLHE22) from Gallus gallus (Chicken).